Reading from the N-terminus, the 515-residue chain is Putative myristoylated protein 118L (515 aa).

The N-myristoyl glycine; by host moiety is linked to residue G2. Helical transmembrane passes span 188 to 208, 214 to 234, and 482 to 502; these read LSLA…VGGV, IIFP…FQWT, and WLLY…AFSS.

Belongs to the IIV-6 118L/458R family.

The protein resides in the membrane. This chain is Putative myristoylated protein 118L, found in Acheta domesticus (House cricket).